The sequence spans 715 residues: Poly(A) polymerase alpha-A (715 aa).

Residues 82–84 (FGP), threonine 91, 95–97 (DID), aspartate 149, lysine 210, tyrosine 219, and 228–229 (GV) each bind ATP. The Mg(2+) site is built by aspartate 95, aspartate 97, and aspartate 149. Residues 472–489 (RKQLHQLQPSHVSPKKKK) carry the Nuclear localization signal 1 motif. 3 disordered regions span residues 510–543 (DSDNSMSVPSPTNATRTSPLNSSGLSQGNSPAAP), 560–590 (QNNSTENLGGSLNESIPESATHPGFSSTPKP), and 607–693 (KPVS…DLSD). Polar residues-rich tracts occupy residues 515-539 (MSVPSPTNATRTSPLNSSGLSQGNS) and 560-588 (QNNSTENLGGSLNESIPESATHPGFSSTP). Positions 624 to 639 (KRTSSPSNEDSPKKNK) match the Nuclear localization signal 2 motif. Residues 655–673 (DQNKLETEELKEVHSEEKS) are compositionally biased toward basic and acidic residues. Polar residues predominate over residues 674 to 692 (SSPVPGSLPFSQQSSTDLS).

It belongs to the poly(A) polymerase family. In terms of assembly, monomer. It depends on Mg(2+) as a cofactor. Requires Mn(2+) as cofactor.

The protein localises to the nucleus. The enzyme catalyses RNA(n) + ATP = RNA(n)-3'-adenine ribonucleotide + diphosphate. Its function is as follows. Polymerase that creates the 3'-poly(A) tail of mRNA's. May acquire specificity through interaction with a cleavage and polyadenylation factor (CPSF). This chain is Poly(A) polymerase alpha-A (papola-a), found in Xenopus laevis (African clawed frog).